The sequence spans 525 residues: Bifunctional purine biosynthesis protein PurH (525 aa).

The 148-residue stretch at 1 to 148 (MPSNNLIKNA…KNYKNVIVIV (148 aa)) folds into the MGS-like domain.

The protein belongs to the PurH family.

It carries out the reaction (6R)-10-formyltetrahydrofolate + 5-amino-1-(5-phospho-beta-D-ribosyl)imidazole-4-carboxamide = 5-formamido-1-(5-phospho-D-ribosyl)imidazole-4-carboxamide + (6S)-5,6,7,8-tetrahydrofolate. The enzyme catalyses IMP + H2O = 5-formamido-1-(5-phospho-D-ribosyl)imidazole-4-carboxamide. It participates in purine metabolism; IMP biosynthesis via de novo pathway; 5-formamido-1-(5-phospho-D-ribosyl)imidazole-4-carboxamide from 5-amino-1-(5-phospho-D-ribosyl)imidazole-4-carboxamide (10-formyl THF route): step 1/1. Its pathway is purine metabolism; IMP biosynthesis via de novo pathway; IMP from 5-formamido-1-(5-phospho-D-ribosyl)imidazole-4-carboxamide: step 1/1. In Buchnera aphidicola subsp. Acyrthosiphon pisum (strain 5A), this protein is Bifunctional purine biosynthesis protein PurH.